A 302-amino-acid polypeptide reads, in one-letter code: Putative S-adenosyl-L-methionine-dependent methyltransferase MUL_2961 (302 aa).

S-adenosyl-L-methionine contacts are provided by residues Asp128 and 157 to 158 (DL).

This sequence belongs to the UPF0677 family.

Exhibits S-adenosyl-L-methionine-dependent methyltransferase activity. This chain is Putative S-adenosyl-L-methionine-dependent methyltransferase MUL_2961, found in Mycobacterium ulcerans (strain Agy99).